A 271-amino-acid polypeptide reads, in one-letter code: Urease accessory protein UreD (271 aa).

It belongs to the UreD family. UreD, UreF and UreG form a complex that acts as a GTP-hydrolysis-dependent molecular chaperone, activating the urease apoprotein by helping to assemble the nickel containing metallocenter of UreC. The UreE protein probably delivers the nickel.

The protein localises to the cytoplasm. Required for maturation of urease via the functional incorporation of the urease nickel metallocenter. This Halalkalibacterium halodurans (strain ATCC BAA-125 / DSM 18197 / FERM 7344 / JCM 9153 / C-125) (Bacillus halodurans) protein is Urease accessory protein UreD.